Reading from the N-terminus, the 497-residue chain is RNA polymerase sigma factor SigA (497 aa).

2 disordered regions span residues 1-20 (MSTD…PELS) and 62-86 (KTLH…HAPL). Residues 63–73 (TLHENKESDVP) are compositionally biased toward basic and acidic residues. Residues 74-84 (KKRRGRKPKHA) show a composition bias toward basic residues. The segment at 250 to 320 (LVTSNLRLVV…TRAIADQART (71 aa)) is sigma-70 factor domain-2. The short motif at 274-277 (DLIQ) is the Interaction with polymerase core subunit RpoC element. The segment at 329 to 410 (ETINRLAKAE…DTDAQTPDEF (82 aa)) is sigma-70 factor domain-3. Residues 423-478 (LLNNNLSEQEELIVRMRIGMPPYNEPKTLDEVGQKILIPREKIRQIENKAIRKLRH) form a sigma-70 factor domain-4 region. Positions 451-470 (LDEVGQKILIPREKIRQIEN) form a DNA-binding region, H-T-H motif.

The protein belongs to the sigma-70 factor family. RpoD/SigA subfamily. As to quaternary structure, interacts transiently with the RNA polymerase catalytic core.

The protein resides in the cytoplasm. In terms of biological role, sigma factors are initiation factors that promote the attachment of RNA polymerase to specific initiation sites and are then released. This sigma factor is the primary sigma factor during exponential growth. The sequence is that of RNA polymerase sigma factor SigA from Mycoplasma genitalium (strain ATCC 33530 / DSM 19775 / NCTC 10195 / G37) (Mycoplasmoides genitalium).